The primary structure comprises 116 residues: Cation channel sperm-associated auxiliary subunit TMEM262 (116 aa).

The Cytoplasmic portion of the chain corresponds to 1 to 16 (MRWRDRIAVLCFPPGL). The chain crosses the membrane as a helical span at residues 17–38 (MLTVAALILFFIHMGVFASDVH). At 39–51 (NFCVIHNYDHMSF) the chain is on the extracellular side. A helical transmembrane segment spans residues 52–72 (RYTVVLIFSQVISIGWAAMGS). Topologically, residues 73 to 84 (LYAEMTGDKFLR) are cytoplasmic. The chain crosses the membrane as a helical span at residues 85–107 (CFALTILILNGAMFFNRLCLEFL). The Extracellular portion of the chain corresponds to 108–116 (AINYREERH).

In terms of assembly, component of the CatSper complex or CatSpermasome composed of the core pore-forming members CATSPER1, CATSPER2, CATSPER3 and CATSPER4 as well as auxiliary members CATSPERB, CATSPERG, CATSPERD, CATSPERE, CATSPERZ, C2CD6/CATSPERT, SLCO6C1, TMEM249, TMEM262 and EFCAB9. HSPA1 may be an additional auxiliary complex member. The core complex members CATSPER1, CATSPER2, CATSPER3 and CATSPER4 form a heterotetrameric channel. The auxiliary CATSPERB, CATSPERG2, CATSPERD and CATSPERE subunits form a pavilion-like structure over the pore which stabilizes the complex through interactions with CATSPER4, CATSPER3, CATSPER1 and CATSPER2 respectively. SLCO6C1 interacts with CATSPERE and TMEM262/CATSPERH interacts with CATSPERB, further stabilizing the complex. C2CD6/CATSPERT interacts at least with CATSPERD and is required for targeting the CatSper complex in the flagellar membrane.

The protein localises to the cell projection. It is found in the cilium. It localises to the flagellum membrane. Functionally, auxiliary component of the CatSper complex, a complex involved in sperm cell hyperactivation. The sequence is that of Cation channel sperm-associated auxiliary subunit TMEM262 from Mus musculus (Mouse).